The sequence spans 322 residues: Lipoyl synthase (322 aa).

Polar residues predominate over residues 1–12; it reads MVTVLNTVNQSG. Residues 1-22 form a disordered region; it reads MVTVLNTVNQSGRLRHPEKAHR. 7 residues coordinate [4Fe-4S] cluster: Cys-60, Cys-65, Cys-71, Cys-86, Cys-90, Cys-93, and Ser-299. Residues 72-288 form the Radical SAM core domain; sequence WEKKHATFMI…ETIGKTKGFL (217 aa).

Belongs to the radical SAM superfamily. Lipoyl synthase family. It depends on [4Fe-4S] cluster as a cofactor.

It localises to the cytoplasm. The catalysed reaction is [[Fe-S] cluster scaffold protein carrying a second [4Fe-4S](2+) cluster] + N(6)-octanoyl-L-lysyl-[protein] + 2 oxidized [2Fe-2S]-[ferredoxin] + 2 S-adenosyl-L-methionine + 4 H(+) = [[Fe-S] cluster scaffold protein] + N(6)-[(R)-dihydrolipoyl]-L-lysyl-[protein] + 4 Fe(3+) + 2 hydrogen sulfide + 2 5'-deoxyadenosine + 2 L-methionine + 2 reduced [2Fe-2S]-[ferredoxin]. It participates in protein modification; protein lipoylation via endogenous pathway; protein N(6)-(lipoyl)lysine from octanoyl-[acyl-carrier-protein]: step 2/2. Functionally, catalyzes the radical-mediated insertion of two sulfur atoms into the C-6 and C-8 positions of the octanoyl moiety bound to the lipoyl domains of lipoate-dependent enzymes, thereby converting the octanoylated domains into lipoylated derivatives. The sequence is that of Lipoyl synthase from Brucella abortus (strain S19).